The following is a 258-amino-acid chain: Thymidylate synthase (258 aa).

A dUMP-binding site is contributed by R21. H51 provides a ligand contact to (6R)-5,10-methylene-5,6,7,8-tetrahydrofolate. Position 121–122 (121–122 (RR)) interacts with dUMP. C141 (nucleophile) is an active-site residue. DUMP-binding positions include 161–164 (RSAD), N172, and 202–204 (HLY). D164 provides a ligand contact to (6R)-5,10-methylene-5,6,7,8-tetrahydrofolate. A257 contributes to the (6R)-5,10-methylene-5,6,7,8-tetrahydrofolate binding site.

Belongs to the thymidylate synthase family. Bacterial-type ThyA subfamily. Homodimer.

The protein resides in the cytoplasm. The enzyme catalyses dUMP + (6R)-5,10-methylene-5,6,7,8-tetrahydrofolate = 7,8-dihydrofolate + dTMP. Its pathway is pyrimidine metabolism; dTTP biosynthesis. Functionally, catalyzes the reductive methylation of 2'-deoxyuridine-5'-monophosphate (dUMP) to 2'-deoxythymidine-5'-monophosphate (dTMP) while utilizing 5,10-methylenetetrahydrofolate (mTHF) as the methyl donor and reductant in the reaction, yielding dihydrofolate (DHF) as a by-product. This enzymatic reaction provides an intracellular de novo source of dTMP, an essential precursor for DNA biosynthesis. This Dichelobacter nodosus (strain VCS1703A) protein is Thymidylate synthase.